A 238-amino-acid polypeptide reads, in one-letter code: uncharacterized protein (238 aa).

Residues 1 to 28 (MSRNSRGSGRYVFVVLACVFGYTRAVHA) form the signal peptide.

This is an uncharacterized protein from Treponema pallidum (strain Nichols).